Reading from the N-terminus, the 180-residue chain is Cytidylate kinase (180 aa).

Position 7–15 (7–15 (GLPGSGTST)) interacts with ATP.

The protein belongs to the cytidylate kinase family. Type 2 subfamily.

It localises to the cytoplasm. It carries out the reaction CMP + ATP = CDP + ADP. The catalysed reaction is dCMP + ATP = dCDP + ADP. In Methanosarcina mazei (strain ATCC BAA-159 / DSM 3647 / Goe1 / Go1 / JCM 11833 / OCM 88) (Methanosarcina frisia), this protein is Cytidylate kinase (cmk).